A 341-amino-acid chain; its full sequence is uncharacterized protein (341 aa).

This is an uncharacterized protein from Mycobacterium bovis (strain ATCC BAA-935 / AF2122/97).